We begin with the raw amino-acid sequence, 74 residues long: M-myrmeciitoxin-Mb1a (74 aa).

The signal sequence occupies residues 1–26 (MKLSCLLLTLAIIVVLTIVHAPNVEA). The propeptide occupies 27–50 (KALADPESDAVGFADAVGEADPNA). At Gln-73 the chain carries Glutamine amide.

Belongs to the formicidae venom precursor-01 superfamily. Ant pilosulin family. Expressed by the venom gland.

It localises to the secreted. In terms of biological role, shows moderate activity against E.coli and S.aureus (MIC&lt;25 uM), slight activity against B.subtilis (MIC&lt;50 uM), and no activity against L.garvieae, P.aeruginosa, C.albicans, and S.cerevisiae. Has no hemolytic nor cytolytic activity. Causes an IgE-independent histamine release. This Myrmecia banksi (Jack jumper ant) protein is M-myrmeciitoxin-Mb1a.